The primary structure comprises 1041 residues: Probable rhamnogalacturonate lyase C (1041 aa).

An N-terminal signal peptide occupies residues 1 to 21 (MFASTLRKTFVFLGLATYSAA). N-linked (GlcNAc...) asparagine glycosylation is found at Asn28, Asn94, Asn116, Asn142, Asn231, Asn283, Asn528, and Asn634. The disordered stretch occupies residues 703 to 728 (ISRPCPRKGGTRRRKKERKKEGKKQG). The segment covering 707–720 (CPRKGGTRRRKKER) has biased composition (basic residues). N-linked (GlcNAc...) asparagine glycosylation is present at Asn864.

Belongs to the polysaccharide lyase 4 family.

Its subcellular location is the secreted. The catalysed reaction is Endotype eliminative cleavage of L-alpha-rhamnopyranosyl-(1-&gt;4)-alpha-D-galactopyranosyluronic acid bonds of rhamnogalacturonan I domains in ramified hairy regions of pectin leaving L-rhamnopyranose at the reducing end and 4-deoxy-4,5-unsaturated D-galactopyranosyluronic acid at the non-reducing end.. In terms of biological role, pectinolytic enzymes consist of four classes of enzymes: pectin lyase, polygalacturonase, pectin methylesterase and rhamnogalacturonase. Degrades the rhamnogalacturonan I (RG-I) backbone of pectin. This is Probable rhamnogalacturonate lyase C (rglC) from Emericella nidulans (strain FGSC A4 / ATCC 38163 / CBS 112.46 / NRRL 194 / M139) (Aspergillus nidulans).